An 891-amino-acid chain; its full sequence is Dynein axonemal intermediate chain 3 (891 aa).

The segment covering 1–16 (MAPKQKKKSSRRKKSP) has biased composition (basic residues). A disordered region spans residues 1–27 (MAPKQKKKSSRRKKSPKPILAASEDME). WD repeat units lie at residues 395–435 (ESPD…DRIE), 477–533 (GHKR…PLTP), 670–709 (IHDGIVHTIQRSPFYDDIILTVGGWNVAIWKESVMTGPLL), and 713–753 (CAPK…HEPA). Positions 817–861 (HLEYVEQRKKIREQEKKEMEQEMAKKKVKIYQKSKEQMEAELKMD) form a coiled coil.

As to quaternary structure, interacts with ACTR2; this interaction reduces binding of the Arp2/3 complex to the VCA domain of nucleation promoting factors. Part of the multisubunit axonemal dynein complex formed at least of two heavy chains and a number of intermediate and light chains. Found in a associated with the catalytic heavy chain DNAH2, the intermediate chain DNAI4, and the light chain DYNLT1.

The protein resides in the cytoplasm. Acts as a negative regulator of cell migration, invasion, and metastasis downstream of p53/TP53, through inhibition of Arp2/3 complex-mediated actin polymerization. Via its association with the multisubunit axonemal dynein complex, is potentially involved in the regulation of cilia function. May play a role in osteogenesis of dental tissue-derived mesenchymal stem cells. The polypeptide is Dynein axonemal intermediate chain 3 (DNAI3) (Macaca fascicularis (Crab-eating macaque)).